A 783-amino-acid chain; its full sequence is LPS-assembly protein LptD (783 aa).

The first 24 residues, 1–24, serve as a signal peptide directing secretion; it reads MSCFSRTFLAASISAALFAPQIQA.

The protein belongs to the LptD family. Component of the lipopolysaccharide transport and assembly complex. Interacts with LptE and LptA.

Its subcellular location is the cell outer membrane. In terms of biological role, together with LptE, is involved in the assembly of lipopolysaccharide (LPS) at the surface of the outer membrane. This chain is LPS-assembly protein LptD, found in Vibrio cholerae serotype O1 (strain ATCC 39315 / El Tor Inaba N16961).